The sequence spans 878 residues: Alanine--tRNA ligase (878 aa).

Zn(2+)-binding residues include His564, His568, Cys665, and His669.

Belongs to the class-II aminoacyl-tRNA synthetase family. Requires Zn(2+) as cofactor.

It is found in the cytoplasm. It carries out the reaction tRNA(Ala) + L-alanine + ATP = L-alanyl-tRNA(Ala) + AMP + diphosphate. Catalyzes the attachment of alanine to tRNA(Ala) in a two-step reaction: alanine is first activated by ATP to form Ala-AMP and then transferred to the acceptor end of tRNA(Ala). Also edits incorrectly charged Ser-tRNA(Ala) and Gly-tRNA(Ala) via its editing domain. The polypeptide is Alanine--tRNA ligase (Natranaerobius thermophilus (strain ATCC BAA-1301 / DSM 18059 / JW/NM-WN-LF)).